Consider the following 1911-residue polypeptide: Protein TIC 214 (1911 aa).

6 consecutive transmembrane segments (helical) span residues 41 to 61 (IINSVVIVGLYYGFMTTFSIG), 81 to 103 (ISATTGFIMGQLIIFISIYYAPL), 108 to 128 (GKPHTMTVLVLPYLLFNFFWN), 147 to 167 (FNIQCIFLNNFIFQLFNHFIL), 195 to 215 (IGWLIGHIFFIKCVGLVLFWI), and 238 to 258 (IFSILLFITCVYYLGRMPLPI). Disordered stretches follow at residues 265-299 (ETSETEESEENEEESDIEITSEPKEQDEEEGSTEE), 798-817 (DSEEEETKEREKNKEKKEEN), and 1599-1647 (NQNQ…RKKK). The segment covering 268-297 (ETEESEENEEESDIEITSEPKEQDEEEGST) has biased composition (acidic residues). Basic and acidic residues-rich tracts occupy residues 1603–1615 (QEKKQKLSQRDLG) and 1623–1635 (QKQKKKEDGEKNY).

This sequence belongs to the TIC214 family. As to quaternary structure, part of the Tic complex.

The protein localises to the plastid. It is found in the chloroplast inner membrane. Its function is as follows. Involved in protein precursor import into chloroplasts. May be part of an intermediate translocation complex acting as a protein-conducting channel at the inner envelope. This Lemna minor (Common duckweed) protein is Protein TIC 214.